Here is a 238-residue protein sequence, read N- to C-terminus: Uridylate kinase (238 aa).

Residue 12–15 participates in ATP binding; it reads KLSG. The tract at residues 20-25 is involved in allosteric activation by GTP; that stretch reads GEKGFG. Gly-54 contributes to the UMP binding site. ATP contacts are provided by Gly-55 and Arg-59. UMP-binding positions include Asp-74 and 135-142; that span reads TGSPYFST. Asn-163, Tyr-169, and Asp-172 together coordinate ATP.

This sequence belongs to the UMP kinase family. In terms of assembly, homohexamer.

It is found in the cytoplasm. It carries out the reaction UMP + ATP = UDP + ADP. It functions in the pathway pyrimidine metabolism; CTP biosynthesis via de novo pathway; UDP from UMP (UMPK route): step 1/1. With respect to regulation, allosterically activated by GTP. Inhibited by UTP. Its function is as follows. Catalyzes the reversible phosphorylation of UMP to UDP. This chain is Uridylate kinase, found in Lactococcus lactis subsp. lactis (strain IL1403) (Streptococcus lactis).